Here is a 195-residue protein sequence, read N- to C-terminus: Interferon omega-1 (195 aa).

Residues 1–21 (MALLFPLLAALVMTSYSPVGS) constitute a signal peptide (or 23 in some molecules). 2 disulfides stabilise this stretch: Cys-24/Cys-122 and Cys-52/Cys-162. A glycan (N-linked (GlcNAc...) asparagine) is linked at Asn-101.

This sequence belongs to the alpha/beta interferon family.

It is found in the secreted. The chain is Interferon omega-1 (IFNW1) from Homo sapiens (Human).